The sequence spans 185 residues: Meiotically up-regulated gene 5 protein (185 aa).

It is found in the cytoplasm. Its function is as follows. Required for correct meiotic chromosome segregation. This Schizosaccharomyces pombe (strain 972 / ATCC 24843) (Fission yeast) protein is Meiotically up-regulated gene 5 protein (mug5).